The chain runs to 321 residues: Nucleus-vacuole junction protein 1 (321 aa).

Residues 1–22 (MTRPPLVRGIFSLGLSVAVLKG) form the signal peptide. A TSC13-binding region spans residues 73–125 (ELSWRKVFNFISRQSSELDARIYVLILLLSFLLPIAWTVLDGDRETTLEDKDN). A helical transmembrane segment spans residues 94–114 (IYVLILLLSFLLPIAWTVLDG). The segment at 139–195 (KHYNDGERAVLQFGKNRSEPIILSYKDMNVLEGEHEFTSKEEHSNSHLTSKSENALS) is OSH1-binding. The residue at position 156 (Ser156) is a Phosphoserine. A compositionally biased stretch (basic and acidic residues) spans 174–183 (EFTSKEEHSN). Residues 174–194 (EFTSKEEHSNSHLTSKSENAL) are disordered. The span at 184–194 (SHLTSKSENAL) shows a compositional bias: polar residues. Ser199 bears the Phosphoserine mark. The segment at 210–275 (QLEEDKNEPN…SLKSSTSFPI (66 aa)) is disordered. Residues 233–321 (DCSSSSEVES…EQAYSQPFRY (89 aa)) form a VAC8-binding region. Over residues 242 to 262 (SQSKCRKESTAEPDSLSRDTR) the composition is skewed to basic and acidic residues. Residues 263-272 (TTSSLKSSTS) are compositionally biased toward low complexity. Phosphoserine is present on residues Ser285 and Ser298. A disordered region spans residues 299 to 321 (PTKSSNLDAQVNTEQAYSQPFRY).

Interacts with OSH1, TSC13 and VAC8.

Its subcellular location is the nucleus outer membrane. Involved in the formation of nucleus-vacuole (NV) junctions during piecemeal microautophagy of the nucleus (PMN). NV junctions are interorganelle interfaces mediated by NVJ1 in the nuclear envelope and VAC8 on the vacuole membrane. Together, NVJ1 and VAC8 form Velcro-like patches through which teardrop-like portions of the nucleus are pinched off into the vacuolar lumen and degraded by the PMN process. Also acts as an outer-nuclear membrane receptor for OSH1 and TSC13. The chain is Nucleus-vacuole junction protein 1 (NVJ1) from Saccharomyces cerevisiae (strain YJM789) (Baker's yeast).